Reading from the N-terminus, the 350-residue chain is Ketol-acid reductoisomerase (NADP(+)) (350 aa).

In terms of domain architecture, KARI N-terminal Rossmann spans 4-187 (VSITTDYSRM…GGARANIIKT (184 aa)). NADP(+) contacts are provided by residues 30 to 33 (YGSQ), arginine 53, threonine 58, and 88 to 91 (DMVQ). Histidine 113 is an active-site residue. Glycine 139 contributes to the NADP(+) binding site. One can recognise a KARI C-terminal knotted domain in the interval 188 to 333 (TFKEETETDL…KQLRAKMVWL (146 aa)). Residues aspartate 196, glutamate 200, glutamate 232, and glutamate 236 each contribute to the Mg(2+) site. Serine 257 contributes to the substrate binding site.

The protein belongs to the ketol-acid reductoisomerase family. Mg(2+) is required as a cofactor.

The enzyme catalyses (2R)-2,3-dihydroxy-3-methylbutanoate + NADP(+) = (2S)-2-acetolactate + NADPH + H(+). It carries out the reaction (2R,3R)-2,3-dihydroxy-3-methylpentanoate + NADP(+) = (S)-2-ethyl-2-hydroxy-3-oxobutanoate + NADPH + H(+). Its pathway is amino-acid biosynthesis; L-isoleucine biosynthesis; L-isoleucine from 2-oxobutanoate: step 2/4. It participates in amino-acid biosynthesis; L-valine biosynthesis; L-valine from pyruvate: step 2/4. Functionally, involved in the biosynthesis of branched-chain amino acids (BCAA). Catalyzes an alkyl-migration followed by a ketol-acid reduction of (S)-2-acetolactate (S2AL) to yield (R)-2,3-dihydroxy-isovalerate. In the isomerase reaction, S2AL is rearranged via a Mg-dependent methyl migration to produce 3-hydroxy-3-methyl-2-ketobutyrate (HMKB). In the reductase reaction, this 2-ketoacid undergoes a metal-dependent reduction by NADPH to yield (R)-2,3-dihydroxy-isovalerate. The protein is Ketol-acid reductoisomerase (NADP(+)) of Xylella fastidiosa (strain 9a5c).